A 213-amino-acid chain; its full sequence is Cytochrome c biogenesis ATP-binding export protein CcmA (213 aa).

Positions 3–211 (LTAENLGVRR…QMTGFAGVET (209 aa)) constitute an ABC transporter domain. 35-42 (GRNGSGKS) contacts ATP.

This sequence belongs to the ABC transporter superfamily. CcmA exporter (TC 3.A.1.107) family. The complex is composed of two ATP-binding proteins (CcmA) and two transmembrane proteins (CcmB).

It localises to the cell inner membrane. It carries out the reaction heme b(in) + ATP + H2O = heme b(out) + ADP + phosphate + H(+). In terms of biological role, part of the ABC transporter complex CcmAB involved in the biogenesis of c-type cytochromes; once thought to export heme, this seems not to be the case, but its exact role is uncertain. Responsible for energy coupling to the transport system. This chain is Cytochrome c biogenesis ATP-binding export protein CcmA, found in Agrobacterium fabrum (strain C58 / ATCC 33970) (Agrobacterium tumefaciens (strain C58)).